Reading from the N-terminus, the 225-residue chain is Probable polyketide biosynthesis zinc-dependent hydrolase PksB (225 aa).

Zn(2+) is bound by residues H62, H64, D66, H67, H123, D140, and H181.

Belongs to the metallo-beta-lactamase superfamily. It depends on Zn(2+) as a cofactor.

The protein resides in the cytoplasm. The protein operates within antibiotic biosynthesis; bacillaene biosynthesis. Its function is as follows. Probably involved in some intermediate steps for the synthesis of the antibiotic polyketide bacillaene which is involved in secondary metabolism. The sequence is that of Probable polyketide biosynthesis zinc-dependent hydrolase PksB (pksB) from Bacillus subtilis (strain 168).